Here is a 713-residue protein sequence, read N- to C-terminus: MKYLKLFLLLFIIQTQAQQGGMWIPSLLSGMNETEMKNLGMKISADDIYSVNHSSLKDAVPHFNGGCTSEVISPKGLILTNHHCGFDAIQNHSSVDHDYLTNGFWAMKMEDELPNENLVVTFIVSINDVTAQVLDGVASITSETEKQNKIQENITKVTASFAKEAWQENKVRTFFEGNQYILFVTEVFKDVRLVGAPPSLIGKFGSDTDNWVWPRHTGDFSMFRVYANKNNHPAAYSKDNVPYIPKHFLPVSLDGVQEDDFTMVMGYPGKTQEYLPSFAVAQIVNETNPAKIEIREAALKVQDGFMRKDNAIKIQYASKYAGVANYWKKWIGESQGLKKSNAIGLKQNFEKDFQQKVIAAGKQNEYGNLLADFQKYYTEITPYAVSRDYFNEVVVKNTELLSLGYKLYQLEQVFITKGEQAFNDRKENLIKSQADFFKDFNATVDEKVFEQLVALYATKAPKEFLPISLLNVEYKKFAPSIYSKSKLVDYANFKALLSGDAKAVLKKISLDKGYAFVKSLADNYSKNIAPRYDEINLKINALQRIYMKAQLELYPNSRIFPDANSTLRVTYGKVKGYSPKDAIYYNPTTYLDGAIEKYIPGDYEFDVPKKLIDLYNNKDYGQYGENGKLPVCFIGTNHTTGGNSGSPAVDAQGNLIGLNFDRVWEGTMSDIHYDPSICRNVMVDMRYVLFIVDKFAGAKHLINEMKLVHPKKK.

Residues 1-17 (MKYLKLFLLLFIIQTQA) form the signal peptide. Catalysis depends on charge relay system residues H83, D219, and S644.

It belongs to the peptidase S46 family.

In terms of biological role, catalyzes the removal of dipeptides from the N-terminus of oligopeptides. Shows a strict specificity for acidic residues (Asp or Glu) in the P1 position, and has probably a hydrophobic residue preference at the P2 position. Preferentially cleaves the synthetic substrate Leu-Asp-methylcoumaryl-7-amide (Leu-Asp-MCA) as compared to Leu-Glu-MCA. The sequence is that of Asp/Glu-specific dipeptidyl-peptidase (dpp11) from Flavobacterium psychrophilum (strain ATCC 49511 / DSM 21280 / CIP 103535 / JIP02/86).